The primary structure comprises 101 residues: Interleukin-8 (101 aa).

An N-terminal signal peptide occupies residues Met1–Gly22. 2 disulfides stabilise this stretch: Cys34–Cys61 and Cys36–Cys77.

The protein belongs to the intercrine alpha (chemokine CxC) family. In terms of assembly, homodimer. Interacts with TNFAIP6 (via Link domain); this interaction interferes with chemokine binding to glycosaminoglycans.

The protein resides in the secreted. Functionally, chemotactic factor that mediates inflammatory response by attracting neutrophils, basophils, and T-cells to clear pathogens and protect the host from infection. Also plays an important role in neutrophil activation. Released in response to an inflammatory stimulus, exerts its effect by binding to the G-protein-coupled receptors CXCR1 and CXCR2, primarily found in neutrophils, monocytes and endothelial cells. G-protein heterotrimer (alpha, beta, gamma subunits) constitutively binds to CXCR1/CXCR2 receptor and activation by IL8 leads to beta and gamma subunits release from Galpha (GNAI2 in neutrophils) and activation of several downstream signaling pathways including PI3K and MAPK pathways. The chain is Interleukin-8 (CXCL8) from Cavia porcellus (Guinea pig).